The primary structure comprises 294 residues: Protoheme IX farnesyltransferase (294 aa).

9 helical membrane-spanning segments follow: residues 8 to 28 (LTKP…FLIA), 35 to 55 (YSLF…GCVL), 81 to 101 (IFLN…FLFL), 107 to 127 (VLTI…YSLW), 133 to 153 (IYSI…GYCA), 163 to 183 (LMLL…IAIL), 209 to 226 (MVVY…FTVM), 230 to 252 (SYIF…FYGY), and 266 to 286 (FLLS…DHIL).

This sequence belongs to the UbiA prenyltransferase family. Protoheme IX farnesyltransferase subfamily.

It is found in the cell inner membrane. It catalyses the reaction heme b + (2E,6E)-farnesyl diphosphate + H2O = Fe(II)-heme o + diphosphate. The protein operates within porphyrin-containing compound metabolism; heme O biosynthesis; heme O from protoheme: step 1/1. Converts heme B (protoheme IX) to heme O by substitution of the vinyl group on carbon 2 of heme B porphyrin ring with a hydroxyethyl farnesyl side group. This Blochmanniella pennsylvanica (strain BPEN) protein is Protoheme IX farnesyltransferase.